A 238-amino-acid chain; its full sequence is MKVDVVISADYISDDIVKDKVVVVIDMFRATSVITTAINNGCQKIIPYLTVEETLEEAKKYDNNEVILGGERRAVKIEGFDLSNSPLEYTEEVVKNKTVLMTTTNGTRALTKCLLGKKIIIAAMINAEAVAKKLLEFNDDIVIVNAGTNGEFSMDDYICGGYIINTMLKEKSNIELTDIAKTSNMIYESNKDIINYVKEARHYSVMRSLKLDNDIEYCIKKSIIDVVPIYDGDKIIKL.

The protein belongs to the ComB family. Mg(2+) serves as cofactor.

The catalysed reaction is (2R)-O-phospho-3-sulfolactate + H2O = (2R)-3-sulfolactate + phosphate. This is Probable 2-phosphosulfolactate phosphatase from Clostridium botulinum (strain Eklund 17B / Type B).